Reading from the N-terminus, the 365-residue chain is P2Y purinoceptor 4 (365 aa).

Residues 1–34 (MASTESSLLRSLGLSPGPGSSEVELDCWFDEDFK) lie on the Extracellular side of the membrane. Residues 35-61 (FILLPVSYAVVFVLGLGLNAPTLWLFI) form a helical membrane-spanning segment. Over 62–72 (FRLRPWDATAT) the chain is Cytoplasmic. The chain crosses the membrane as a helical span at residues 73–95 (YMFHLALSDTLYVLSLPTLIYYY). Over 96 to 112 (AAHNHWPFGTEICKFVR) the chain is Extracellular. Cys108 and Cys185 are joined by a disulfide. Residues 113 to 131 (FLFYWNLYCSVLFLTCISV) form a helical membrane-spanning segment. Over 132–154 (HRYLGICHPLRALRWGRPRLAGL) the chain is Cytoplasmic. Residues 155–174 (LCLAVWLVVAGCLVPNLFFV) traverse the membrane as a helical segment. Topologically, residues 175 to 196 (TTSNKGTTVLCHDTTRPEEFDH) are extracellular. Residues 197–222 (YVHFSSAVMGLLFGVPCLVTLVCYGL) traverse the membrane as a helical segment. Over 223–246 (MARRLYQPLPGSAQSSSRLRSLRT) the chain is Cytoplasmic. The chain crosses the membrane as a helical span at residues 247–269 (IAVVLTVFAVCFVPFHITRTIYY). Over 270–287 (LARLLEADCRVLNIVNVV) the chain is Extracellular. The helical transmembrane segment at 288 to 309 (YKVTRPLASANSCLDPVLYLLT) threads the bilayer. Residues 310–365 (GDKYRRQLRQLCGGGKPQPRTAASSLALVSLPEDSSCRWAATPQDSSCSTPRADRL) are Cytoplasmic-facing. Phosphoserine is present on residues Ser333 and Ser334.

It belongs to the G-protein coupled receptor 1 family. Phosphorylation of Ser-333 and Ser-334 is a key step in agonist-dependent desensitization and loss of surface P2RY4. This phosphorylation does not involve PKC, nor other calcium activated kinases. As to expression, pancreas.

Its subcellular location is the cell membrane. Receptor for UTP and UDP coupled to G-proteins that activate a phosphatidylinositol-calcium second messenger system. Not activated by ATP or ADP. This Homo sapiens (Human) protein is P2Y purinoceptor 4 (P2RY4).